A 126-amino-acid chain; its full sequence is Phosphoribosyl-AMP cyclohydrolase (126 aa).

A Mg(2+)-binding site is contributed by aspartate 73. A Zn(2+)-binding site is contributed by cysteine 74. Residues aspartate 75 and aspartate 77 each coordinate Mg(2+). Residues cysteine 91 and cysteine 98 each contribute to the Zn(2+) site.

This sequence belongs to the PRA-CH family. In terms of assembly, homodimer. Mg(2+) serves as cofactor. It depends on Zn(2+) as a cofactor.

It is found in the cytoplasm. The catalysed reaction is 1-(5-phospho-beta-D-ribosyl)-5'-AMP + H2O = 1-(5-phospho-beta-D-ribosyl)-5-[(5-phospho-beta-D-ribosylamino)methylideneamino]imidazole-4-carboxamide. It participates in amino-acid biosynthesis; L-histidine biosynthesis; L-histidine from 5-phospho-alpha-D-ribose 1-diphosphate: step 3/9. Functionally, catalyzes the hydrolysis of the adenine ring of phosphoribosyl-AMP. The chain is Phosphoribosyl-AMP cyclohydrolase from Solibacter usitatus (strain Ellin6076).